A 1381-amino-acid chain; its full sequence is Peroxisomal ATPase PEX6 (1381 aa).

Over residues 1–10 (MTAPNSTPAS) the composition is skewed to polar residues. Disordered regions lie at residues 1–23 (MTAP…QDKP), 247–315 (VRTS…DNLS), 333–374 (TVTG…DRPR), and 467–499 (YSSR…NPPA). Basic residues predominate over residues 11-20 (SRKRVRRRRQ). Composition is skewed to acidic residues over residues 270 to 284 (AEDD…AEED) and 296 to 315 (TDAD…DNLS). 3 stretches are compositionally biased toward polar residues: residues 333-345 (TVTG…TGTP), 355-367 (GPGS…TATT), and 487-499 (FFEA…NPPA). Position 1031–1038 (1031–1038 (GPPGTGKT)) interacts with ATP. 2 stretches are compositionally biased toward basic and acidic residues: residues 1294–1305 (GAKDKDKKKEGA) and 1337–1350 (STKK…KAAD). The segment at 1294-1381 (GAKDKDKKKE…GGDEDEGLYD (88 aa)) is disordered. Residues 1372-1381 (GGDEDEGLYD) are compositionally biased toward acidic residues.

It belongs to the AAA ATPase family. In terms of assembly, interacts with PEX1; forming the PEX1-PEX6 AAA ATPase complex, which is composed of a heterohexamer formed by a trimer of PEX1-PEX6 dimers.

The protein resides in the cytoplasm. The protein localises to the cytosol. It is found in the peroxisome membrane. It carries out the reaction ATP + H2O = ADP + phosphate + H(+). Functionally, component of the PEX1-PEX6 AAA ATPase complex, a protein dislocase complex that mediates the ATP-dependent extraction of the PEX5 receptor from peroxisomal membranes, an essential step for PEX5 recycling. Specifically recognizes PEX5 monoubiquitinated at 'Cys-6', and pulls it out of the peroxisome lumen through the PEX2-PEX10-PEX12 retrotranslocation channel. Extraction by the PEX1-PEX6 AAA ATPase complex is accompanied by unfolding of the TPR repeats and release of bound cargo from PEX5. This Neurospora crassa (strain ATCC 24698 / 74-OR23-1A / CBS 708.71 / DSM 1257 / FGSC 987) protein is Peroxisomal ATPase PEX6 (pex-6).